A 274-amino-acid polypeptide reads, in one-letter code: Putative phosphatase BUsg_029 (274 aa).

Residue Asp8 is the Nucleophile of the active site. Residue Asp8 coordinates Mg(2+). Leu9 contacts phosphate. A Mg(2+)-binding site is contributed by Asp10. Phosphate is bound by residues 42–43 and Lys191; that span reads SG. Asp214 contacts Mg(2+). Asn217 is a binding site for phosphate.

This sequence belongs to the HAD-like hydrolase superfamily. Cof family. Mg(2+) serves as cofactor.

This Buchnera aphidicola subsp. Schizaphis graminum (strain Sg) protein is Putative phosphatase BUsg_029.